The following is a 399-amino-acid chain: Transcription factor UNE10 (399 aa).

Disordered regions lie at residues 119–158 and 173–228; these read QSKPGGVGSTRVGSCSDGRTMGGGKRARVAPEWSGGGSQR and MGSH…RRDK. Residues 178–201 are compositionally biased toward basic and acidic residues; that stretch reads NTIDDHDSVCHSRPQMEDEEEKKA. The 50-residue stretch at 213-262 folds into the bHLH domain; sequence RAAAIHNQSERKRRDKINQRMKTLQKLVPNSSKTDKASMLDEVIEYLKQL.

Homodimer. Associates to PTAC12/HMR/PAP5 which acts as a transcriptional coactivator. Interacts with the Pfr form of phyB but barely with that of phyA. Binds to COP1. Ubiquitinated and subsequently targeted to protein degradation by COP1 in the dark, but not in far-red light. In terms of tissue distribution, mainly expressed in stems, leaves, seedlings, fruits and flowers, and, to a lower extent, in roots.

The protein localises to the nucleus. Its activity is regulated as follows. Stabilized by phyA but destabilized by phyB. Accumulates in the dark but not in far-red light upon MG132 treatment, a 26S proteasome inhibitor (at protein level). Transcription factor binding to G-box elements (5'-CACGTG-3') in target genes promoters, particularly in far-red light but barely in the dark. Required during the fertilization of ovules by pollen. Repressor of phytochrome A-mediated far-red light responses including seed germination, suppression of hypocotyl elongation, and randomization of hypocotyl growth orientation. Does not inhibit phyB-induced red light responses. The polypeptide is Transcription factor UNE10 (Arabidopsis thaliana (Mouse-ear cress)).